The sequence spans 572 residues: Proline--tRNA ligase (572 aa).

Belongs to the class-II aminoacyl-tRNA synthetase family. ProS type 1 subfamily. In terms of assembly, homodimer.

It localises to the cytoplasm. It carries out the reaction tRNA(Pro) + L-proline + ATP = L-prolyl-tRNA(Pro) + AMP + diphosphate. Its function is as follows. Catalyzes the attachment of proline to tRNA(Pro) in a two-step reaction: proline is first activated by ATP to form Pro-AMP and then transferred to the acceptor end of tRNA(Pro). As ProRS can inadvertently accommodate and process non-cognate amino acids such as alanine and cysteine, to avoid such errors it has two additional distinct editing activities against alanine. One activity is designated as 'pretransfer' editing and involves the tRNA(Pro)-independent hydrolysis of activated Ala-AMP. The other activity is designated 'posttransfer' editing and involves deacylation of mischarged Ala-tRNA(Pro). The misacylated Cys-tRNA(Pro) is not edited by ProRS. In Escherichia coli O127:H6 (strain E2348/69 / EPEC), this protein is Proline--tRNA ligase.